A 334-amino-acid chain; its full sequence is UDP-N-acetylglucosamine 4,6-dehydratase (inverting) (334 aa).

Residues 13-16 (TGSF), 37-42 (SRDELK), 61-62 (DV), Ala-81, Lys-85, and 123-124 (LS) each bind NADP(+). Lys-85 contributes to the substrate binding site. Residue Lys-127 is part of the active site. 2 residues coordinate NADP(+): Tyr-135 and Lys-139. Asn-167 serves as a coordination point for substrate. 168–172 (VVGSR) contacts NADP(+). The substrate site is built by Val-175, Thr-193, Arg-252, and Glu-255.

Belongs to the polysaccharide synthase family. As to quaternary structure, homohexamer. NADP(+) serves as cofactor.

It catalyses the reaction UDP-N-acetyl-alpha-D-glucosamine = UDP-2-acetamido-2,6-dideoxy-beta-L-arabino-hex-4-ulose + H2O. Catalyzes the first step in the biosynthesis of pseudaminic acid, a sialic-acid-like sugar that is used to modify flagellin. Has both C6 dehydratase and C5 epimerase activities that result in the production of both UDP-2-acetamido-2,6-dideoxy-beta-L-arabino-4-hexulose and UDP-2-acetamido-2,6-dideoxy-alpha-D-xylo-4-hexulose. This chain is UDP-N-acetylglucosamine 4,6-dehydratase (inverting) (pseB), found in Campylobacter jejuni subsp. jejuni serotype O:2 (strain ATCC 700819 / NCTC 11168).